The chain runs to 486 residues: Vanillin dehydrogenase (486 aa).

NAD(+) is bound by residues 210-211 (GP), 230-231 (GS), and 252-254 (ELG). The Proton acceptor role is filled by glutamate 252. Residue cysteine 286 is the Nucleophile of the active site. An NAD(+)-binding site is contributed by 380–382 (EVF).

Belongs to the aldehyde dehydrogenase family.

The enzyme catalyses vanillin + NAD(+) + H2O = vanillate + NADH + 2 H(+). Catalyzes NAD(+)-dependent oxidation of vanillin to vanillate. Also oxidizes other aromatic aldehydes including benzaldehyde, coniferyl aldehyde and cinnamaldehyde, but has a preference for vanillin. Not active with NADP(+). Involved in the degradation pathway of lignin-derived aromatic compounds of plant cell walls. Catalyzes the conversion of vanillin to vanillate due to toxicity of vanillin to the cells. The protein is Vanillin dehydrogenase of Amycolatopsis sp. (strain ATCC 39116 / 75iv2).